Reading from the N-terminus, the 281-residue chain is Cell growth regulator with EF hand domain protein 1 (281 aa).

An N-terminal signal peptide occupies residues 1-21; the sequence is MFQWLMQALMLPLLLLPLGRA. EF-hand domains follow at residues 71-106 and 115-150; these read DREQ…ALAP and PVIL…PKHT. The Ca(2+) site is built by D84, D86, N88, Q90, E95, D128, D130, D132, and E139. A disordered region spans residues 148 to 281; the sequence is KHTESLPPAL…HSIQLENDEI (134 aa). The span at 168 to 183 shows a compositional bias: polar residues; that stretch reads LLANSPLQSETQQSLG. Basic and acidic residues predominate over residues 184–213; the sequence is TKEEIRGQVEAKRASLEPEQEAGHQTEGKV. S217 and S228 each carry phosphoserine. The segment covering 237–256 has biased composition (basic and acidic residues); it reads EGAEEQVEIKDNEGEAKELL.

Probably digested extracellularly by an unknown serine protease generating extremely hydrophobic bioactive peptides.

It is found in the secreted. Its function is as follows. Mediates cell-cell adhesion in a calcium-dependent manner. Able to inhibit growth in several cell lines. This is Cell growth regulator with EF hand domain protein 1 from Mus musculus (Mouse).